The following is a 310-amino-acid chain: Porphobilinogen deaminase (310 aa).

Position 241 is an S-(dipyrrolylmethanemethyl)cysteine (C241).

Belongs to the HMBS family. As to quaternary structure, monomer. The cofactor is dipyrromethane.

It carries out the reaction 4 porphobilinogen + H2O = hydroxymethylbilane + 4 NH4(+). Its pathway is porphyrin-containing compound metabolism; protoporphyrin-IX biosynthesis; coproporphyrinogen-III from 5-aminolevulinate: step 2/4. Tetrapolymerization of the monopyrrole PBG into the hydroxymethylbilane pre-uroporphyrinogen in several discrete steps. In Pelobacter propionicus (strain DSM 2379 / NBRC 103807 / OttBd1), this protein is Porphobilinogen deaminase.